The following is a 76-amino-acid chain: Beta-defensin 121 (76 aa).

The first 15 residues, 1 to 15, serve as a signal peptide directing secretion; that stretch reads MKLLLLLLTVTLLLA. 3 disulfides stabilise this stretch: Cys-23–Cys-50, Cys-30–Cys-44, and Cys-34–Cys-51.

It belongs to the beta-defensin family. In terms of tissue distribution, abundant expression in the male reproductive tract only.

Its subcellular location is the secreted. Functionally, has antibacterial activity. In Homo sapiens (Human), this protein is Beta-defensin 121 (DEFB121).